The sequence spans 293 residues: Ribosomal protein L11 methyltransferase (293 aa).

S-adenosyl-L-methionine contacts are provided by T145, G166, D188, and N230.

Belongs to the methyltransferase superfamily. PrmA family.

Its subcellular location is the cytoplasm. The enzyme catalyses L-lysyl-[protein] + 3 S-adenosyl-L-methionine = N(6),N(6),N(6)-trimethyl-L-lysyl-[protein] + 3 S-adenosyl-L-homocysteine + 3 H(+). In terms of biological role, methylates ribosomal protein L11. In Erwinia tasmaniensis (strain DSM 17950 / CFBP 7177 / CIP 109463 / NCPPB 4357 / Et1/99), this protein is Ribosomal protein L11 methyltransferase.